A 153-amino-acid chain; its full sequence is Nucleoside diphosphate kinase (153 aa).

Residues Lys13, Phe61, Arg89, Thr95, Arg106, and Asn116 each contribute to the ATP site. The Pros-phosphohistidine intermediate role is filled by His119.

This sequence belongs to the NDK family. Mg(2+) is required as a cofactor.

It localises to the cytoplasm. Its subcellular location is the cell membrane. The enzyme catalyses a 2'-deoxyribonucleoside 5'-diphosphate + ATP = a 2'-deoxyribonucleoside 5'-triphosphate + ADP. It carries out the reaction a ribonucleoside 5'-diphosphate + ATP = a ribonucleoside 5'-triphosphate + ADP. Its function is as follows. Major role in the synthesis of nucleoside triphosphates other than ATP. The ATP gamma phosphate is transferred to the NDP beta phosphate via a ping-pong mechanism, using a phosphorylated active-site intermediate. This is Nucleoside diphosphate kinase from Gallus gallus (Chicken).